The primary structure comprises 482 residues: Glutamyl-tRNA(Gln) amidotransferase subunit A (482 aa).

Residues Lys-75 and Ser-150 each act as charge relay system in the active site. The Acyl-ester intermediate role is filled by Ser-174.

It belongs to the amidase family. GatA subfamily. In terms of assembly, heterotrimer of A, B and C subunits.

It catalyses the reaction L-glutamyl-tRNA(Gln) + L-glutamine + ATP + H2O = L-glutaminyl-tRNA(Gln) + L-glutamate + ADP + phosphate + H(+). Allows the formation of correctly charged Gln-tRNA(Gln) through the transamidation of misacylated Glu-tRNA(Gln) in organisms which lack glutaminyl-tRNA synthetase. The reaction takes place in the presence of glutamine and ATP through an activated gamma-phospho-Glu-tRNA(Gln). The chain is Glutamyl-tRNA(Gln) amidotransferase subunit A from Cyanothece sp. (strain PCC 7425 / ATCC 29141).